The primary structure comprises 1513 residues: DNA topoisomerase 2-binding protein 1-A (1513 aa).

2 BRCT domains span residues Val-101 to Val-189 and Tyr-194 to Ile-283. A disordered region spans residues Ile-289–Arg-308. BRCT domains follow at residues Ala-354–His-444, Ala-530–Leu-621, and Glu-629–Val-726. Polar residues predominate over residues Gln-789 to Gly-799. Positions Gln-789 to Ser-809 are disordered. A Nuclear localization signal motif is present at residues Pro-844 to Thr-850. Residues Asp-892–His-984 enclose the BRCT 6 domain. 2 disordered regions span residues Glu-1031–Val-1053 and Ser-1086–Arg-1109. Position 1131 is a phosphoserine (Ser-1131). 2 consecutive BRCT domains span residues Ser-1253–Trp-1344 and Ile-1383–Leu-1480. The Nuclear localization signal motif lies at Lys-1508–Arg-1511.

The protein belongs to the TOPBP1 family. In terms of assembly, interacts with cdc45. Interacts (via BRCT domains) with ticrr; interaction is cdk2-dependent. Interacts with atr in the presence of atrip. Interacts with recql4 (via N-terminus). Interacts with gmnc. Interacts with cip2a; forming the CIP2A-TOPBP1 complex. In terms of processing, phosphorylation at Ser-1131 is essential for phosphorylation of chek1, and thus for checkpoint regulation.

The protein resides in the nucleus. The protein localises to the chromosome. Its subcellular location is the cytoplasm. It localises to the cytoskeleton. It is found in the microtubule organizing center. The protein resides in the centrosome. The protein localises to the spindle pole. Functionally, scaffold protein that acts as a key protein-protein adapter in DNA replication and DNA repair. Composed of multiple BRCT domains, which specifically recognize and bind phosphorylated proteins, bringing proteins together into functional combinations. Required for DNA replication initiation but not for the formation of pre-replicative complexes or the elongation stages. Necessary for the loading of replication factors onto chromatin, including gmnc, cdc45, DNA polymerases and components of the GINS complex such as ginsl/sld5. Plays a central role in DNA repair by bridging proteins and promoting recruitment of proteins to DNA damage sites. Involved in double-strand break (DSB) repair via homologous recombination in S-phase by promoting the exchange between the DNA replication factor A (RPA) complex and RAD51. Involved in microhomology-mediated end-joining (MMEJ) DNA repair by promoting recruitment of polymerase theta (POLQ) to DNA damage sites during mitosis. In response to DNA damage, triggers the recruitment of checkpoint signaling proteins on chromatin, which activate the chek1 signaling pathway and block S-phase progression. Increases the kinase activity of atr to numerous substrates, and is required for the phosphorylation of Rad1. Together with cip2a, plays an essential role in the response to genome instability generated by the presence of acentric chromosome fragments derived from shattered chromosomes within micronuclei. The CIP2A-TOPBP1 complex tethers chromosome fragments during mitosis to ensure clustered segregation of the fragments to a single daughter cell nucleus, facilitating re-ligation with limited chromosome scattering and loss. The chain is DNA topoisomerase 2-binding protein 1-A (topbp1-A) from Xenopus laevis (African clawed frog).